Reading from the N-terminus, the 197-residue chain is Rac-like GTP-binding protein ARAC6 (197 aa).

GTP is bound at residue 13–20; the sequence is GDGAVGKT. Positions 35–43 match the Effector region motif; the sequence is YVPTVFDNF. GTP contacts are provided by residues 60 to 64 and 118 to 121; these read DTAGQ and TKLD. Position 160 (Ser-160) interacts with GDP. Cys-194 is modified (cysteine methyl ester). Cys-194 carries S-geranylgeranyl cysteine lipidation. Positions 195–197 are cleaved as a propeptide — removed in mature form; the sequence is SIL.

Belongs to the small GTPase superfamily. Rho family. Interacts with SPK1. Ubiquitous. Preferentially expressed in mature pollen and pollen tubes.

Its subcellular location is the cytoplasm. The protein resides in the membrane. Functionally, may be involved in cell polarity control during the actin-dependent tip growth of pollen tubes. Inactive GDP-bound Rho GTPases reside in the cytosol, are found in a complex with Rho GDP-dissociation inhibitors (Rho GDIs), and are released from the GDI protein in order to translocate to membranes upon activation. The chain is Rac-like GTP-binding protein ARAC6 (ARAC6) from Arabidopsis thaliana (Mouse-ear cress).